The primary structure comprises 360 residues: Peptide chain release factor 1 (360 aa).

N5-methylglutamine is present on Gln235. The segment covering 284–293 has biased composition (basic and acidic residues); it reads ARRQQEESST. The disordered stretch occupies residues 284-314; the sequence is ARRQQEESSTRRNLLGSGDRSDRNRTYNFPQ.

It belongs to the prokaryotic/mitochondrial release factor family. Post-translationally, methylated by PrmC. Methylation increases the termination efficiency of RF1.

It localises to the cytoplasm. Functionally, peptide chain release factor 1 directs the termination of translation in response to the peptide chain termination codons UAG and UAA. The polypeptide is Peptide chain release factor 1 (Erwinia tasmaniensis (strain DSM 17950 / CFBP 7177 / CIP 109463 / NCPPB 4357 / Et1/99)).